The following is a 494-amino-acid chain: Ubiquinol-cytochrome-c reductase complex core protein I, mitochondrial (494 aa).

H70 contacts Zn(2+). Catalysis depends on E73, which acts as the Proton acceptor. Residues H74 and E150 each contribute to the Zn(2+) site.

It belongs to the peptidase M16 family. UQCRC1/QCR1 subfamily. As to quaternary structure, component of the ubiquinol-cytochrome c oxidoreductase (cytochrome b-c1 complex, complex III, CIII), a multisubunit enzyme composed of 10 subunits. The complex is composed of 3 respiratory subunits cytochrome b, cytochrome c1 and Rieske protein, 2 core protein subunits, and additional low-molecular weight protein subunits. The complex exists as an obligatory dimer and forms supercomplexes (SCs) in the inner mitochondrial membrane with cytochrome c oxidase (complex IV, CIV). Requires Zn(2+) as cofactor. In terms of processing, the N-terminus is blocked.

The protein resides in the mitochondrion inner membrane. Component of the ubiquinol-cytochrome c oxidoreductase, a multisubunit transmembrane complex that is part of the mitochondrial electron transport chain which drives oxidative phosphorylation. The respiratory chain contains 3 multisubunit complexes succinate dehydrogenase (complex II, CII), ubiquinol-cytochrome c oxidoreductase (cytochrome b-c1 complex, complex III, CIII) and cytochrome c oxidase (complex IV, CIV), that cooperate to transfer electrons derived from NADH and succinate to molecular oxygen, creating an electrochemical gradient over the inner membrane that drives transmembrane transport and the ATP synthase. The cytochrome b-c1 complex catalyzes electron transfer from ubiquinol to cytochrome c, linking this redox reaction to translocation of protons across the mitochondrial inner membrane, with protons being carried across the membrane as hydrogens on the quinol. In the process called Q cycle, 2 protons are consumed from the matrix, 4 protons are released into the intermembrane space and 2 electrons are passed to cytochrome c. The polypeptide is Ubiquinol-cytochrome-c reductase complex core protein I, mitochondrial (Euglena gracilis).